We begin with the raw amino-acid sequence, 576 residues long: Laccase-1 (576 aa).

Residues 1–19 (MARTTFLVSVSLFVSAVLA) form the signal peptide. Plastocyanin-like domains follow at residues 21 to 145 (TVEY…LVIY) and 157 to 304 (VDDE…LVYE). Asn-41 is a glycosylation site (N-linked (GlcNAc...) asparagine). The Cu cation site is built by His-82, His-84, His-127, and His-129. Cys-103 and Cys-562 are disulfide-bonded. Residues Asn-182, Asn-228, Asn-294, and Asn-368 are each glycosylated (N-linked (GlcNAc...) asparagine). One can recognise a Plastocyanin-like 3 domain in the interval 376–576 (DESKLVPLEY…NWLKSNPGQL (201 aa)). 7 residues coordinate Cu cation: His-471, His-474, His-476, His-523, Cys-524, His-525, and His-529.

The protein belongs to the multicopper oxidase family. As to quaternary structure, homodimer. Cu cation is required as a cofactor. As to expression, in mycelia, at a lower level than LCC4.

The protein resides in the secreted. It carries out the reaction 4 hydroquinone + O2 = 4 benzosemiquinone + 2 H2O. Its function is as follows. Lignin degradation and detoxification of lignin-derived products. The sequence is that of Laccase-1 (LCC1) from Thanatephorus cucumeris (Black scurf of potato).